Here is a 120-residue protein sequence, read N- to C-terminus: U13-lycotoxin-Ls1a (120 aa).

An N-terminal signal peptide occupies residues 1–16 (MKILFVLISILHAVYC). The propeptide occupies 17–54 (FSSEEDVDSAYLANELEPVEDINSEQYAALEPKEEHER). 4 disulfides stabilise this stretch: cysteine 56/cysteine 70, cysteine 63/cysteine 76, cysteine 69/cysteine 87, and cysteine 78/cysteine 85. The Agouti domain maps to 56-95 (CADMGQDCKDDCDCCLNIATCNCWFGRYFCSCTFGDYQTC).

This sequence belongs to the neurotoxin 05 (agouti) family. In terms of processing, contains 6 disulfide bonds. Expressed by the venom gland.

It localises to the secreted. This Lycosa singoriensis (Wolf spider) protein is U13-lycotoxin-Ls1a.